We begin with the raw amino-acid sequence, 834 residues long: Translation factor GUF1 homolog, mitochondrial (834 aa).

A mitochondrion-targeting transit peptide spans 1-66; the sequence is MKLCGVRSSG…RPLLAEPRRY (66 aa). Positions 129–314 constitute a tr-type G domain; it reads ACIRNVSVVA…HIIDKVPPPC (186 aa). Residues 138–145, 205–209, and 259–262 each bind GTP; these read AHVDHGKT, DTPGH, and TKMD. 2 disordered regions span residues 363 to 385 and 476 to 507; these read GAAS…ASGG and TGSP…SSSV. Residues 488–507 are compositionally biased toward low complexity; sequence ATAAETASSDDASGSGSSSV.

The protein belongs to the TRAFAC class translation factor GTPase superfamily. Classic translation factor GTPase family. LepA subfamily.

The protein resides in the mitochondrion inner membrane. The catalysed reaction is GTP + H2O = GDP + phosphate + H(+). In terms of biological role, promotes mitochondrial protein synthesis. May act as a fidelity factor of the translation reaction, by catalyzing a one-codon backward translocation of tRNAs on improperly translocated ribosomes. Binds to mitochondrial ribosomes in a GTP-dependent manner. The sequence is that of Translation factor GUF1 homolog, mitochondrial from Leishmania infantum.